The sequence spans 218 residues: MAGDLWLVGDCTNHGGLSDAIIVSPDYRLLPEATGADIFDDVEAFWNWLHTSLPSLAQSYSWQAQPDLTRILCVGQSGGGSMAVHSALLHPEYSIKVIVSLYAPLYHNVPNLTVPRPRRILGTMPPPPRKAEGLIRSYIKQSKGSVRTGGNPFDMWELLLCLLQQGRLISLMNIKPDSRLDTPFLLRQVGKLPPLWLIHGEDDSVVGPSTICVHRVIF.

An Involved in the stabilization of the negatively charged intermediate by the formation of the oxyanion hole motif is present at residues 7–9 (LVG). The active site involves serine 77.

Belongs to the 'GDXG' lipolytic enzyme family.

It catalyses the reaction a carboxylic ester + H2O = an alcohol + a carboxylate + H(+). It participates in secondary metabolite biosynthesis. Probable carboxylesterase; part of the gene cluster that mediates the biosynthesis of squalestatin S1 (SQS1, also known as zaragozic acid A), a heavily oxidized fungal polyketide that offers potent cholesterol lowering activity by targeting squalene synthase (SS). SQS1 is composed of a 2,8-dioxobicyclic[3.2.1]octane-3,4,5-tricarboxyclic acid core that is connected to two lipophilic polyketide arms. These initial steps feature the priming of an unusual benzoic acid starter unit onto the highly reducing polyketide synthase clz14, followed by oxaloacetate extension and product release to generate a tricarboxylic acid containing product. The phenylalanine ammonia lyase (PAL) clz10 and the acyl-CoA ligase clz12 are involved in transforming phenylalanine into benzoyl-CoA. The citrate synthase-like protein clz17 is involved in connecting the C-alpha-carbons of the hexaketide chain and oxaloacetate to afford the tricarboxylic acid unit. The potential hydrolytic enzymes, clz11 and clz13, are in close proximity to pks2 and may participate in product release. On the other side, the tetraketide arm is synthesized by a the squalestatin tetraketide synthase clz2 and enzymatically esterified to the core in the last biosynthetic step, by the acetyltransferase clz6. The biosynthesis of the tetraketide must involve 3 rounds of chain extension. After the first and second rounds methyl-transfer occurs, and in all rounds of extension the ketoreductase and dehydratase are active. The enoyl reductase and C-MeT of clz2 are not active in the final round of extension. The acetyltransferase clz6 appears to have a broad substrate selectivity for its acyl CoA substrate, allowing the in vitro synthesis of novel squalestatins. The biosynthesis of SQS1 requires several oxidative steps likely performed by oxidoreductases clz3, clz15 and clz16. Finally, in support of the identification of the cluster as being responsible for SQS1 production, the cluster contains a gene encoding a putative squalene synthase (SS) clz20, suggesting a likely mechanism for self-resistance. The polypeptide is Probable carboxylesterase clz11 (Cochliobolus lunatus (Filamentous fungus)).